We begin with the raw amino-acid sequence, 174 residues long: Methylated protein MJ0556 (174 aa).

2 CBS domains span residues 28 to 87 (MISG…YLNV) and 91 to 156 (MLKN…IIKE).

Methylated at an undetermined residue between Ser-2 and Asp-26.

The sequence is that of Methylated protein MJ0556 from Methanocaldococcus jannaschii (strain ATCC 43067 / DSM 2661 / JAL-1 / JCM 10045 / NBRC 100440) (Methanococcus jannaschii).